The following is a 99-amino-acid chain: Cell division protein FtsB (99 aa).

Topologically, residues 1 to 3 are cytoplasmic; sequence MKF. A helical transmembrane segment spans residues 4 to 21; that stretch reads FVITLIVLLGLLQYRLWS. Topologically, residues 22 to 99 are periplasmic; sequence GDNSLPEYFV…GDRAVSSPSQ (78 aa). Residues 31-73 adopt a coiled-coil conformation; it reads VLQKQIAAQQDGNAKLNERNQVLKEEIIDLKSGTEAIEERARN.

This sequence belongs to the FtsB family. Part of a complex composed of FtsB, FtsL and FtsQ.

Its subcellular location is the cell inner membrane. Functionally, essential cell division protein. May link together the upstream cell division proteins, which are predominantly cytoplasmic, with the downstream cell division proteins, which are predominantly periplasmic. This Shewanella oneidensis (strain ATCC 700550 / JCM 31522 / CIP 106686 / LMG 19005 / NCIMB 14063 / MR-1) protein is Cell division protein FtsB.